Consider the following 140-residue polypeptide: Putative ABC transporter permease protein ORF1 (140 aa).

One can recognise an ABC transmembrane type-1 domain in the interval 1-133; that stretch reads DPNVAFYSVV…ITTAGIFAYF (133 aa). The next 3 membrane-spanning stretches (helical) occupy residues 9 to 29, 65 to 85, and 115 to 135; these read VVAV…IAAL, TACI…YVMT, and TIAS…YFVT.

Belongs to the binding-protein-dependent transport system permease family. MalFG subfamily.

The protein localises to the cell membrane. May play a role in sugar transport. This chain is Putative ABC transporter permease protein ORF1, found in Caldicellulosiruptor sp. (strain Rt8B.4).